We begin with the raw amino-acid sequence, 1183 residues long: Rab11 family-interacting protein 3 (1183 aa).

Residues 423–448 (AEDPSTESLPRKNGQEESKSALPVST) are disordered. The segment covering 431-441 (LPRKNGQEESK) has biased composition (basic and acidic residues). 2 consecutive EF-hand domains span residues 706–741 (EEQS…YGAE) and 738–773 (YGAE…ISNE). The Ca(2+) site is built by Asp-719, Asp-721, Asp-723, Glu-730, Asp-751, Ser-753, and Asp-762. Positions 902–1121 (ELEKDSLESE…NGQIINLSIQ (220 aa)) form a coiled coil. The ARF-binding domain (ABD) stretch occupies residues 911–1015 (EEQHARLRQE…LQDEADDITQ (105 aa)). The disordered stretch occupies residues 1005–1044 (KLQDEADDITQRLNEESESRRKMSDKLSHERHTNQKEKEC). One can recognise an FIP-RBD domain in the interval 1121–1183 (QGAKSLFTES…ESNPSILEVK (63 aa)).

It is found in the recycling endosome membrane. The protein localises to the cytoplasm. Its subcellular location is the cytoskeleton. The protein resides in the microtubule organizing center. It localises to the centrosome. It is found in the cleavage furrow. The protein localises to the midbody. Its subcellular location is the golgi apparatus membrane. The protein resides in the golgi apparatus. It localises to the trans-Golgi network membrane. In terms of biological role, downstream effector molecule for Rab11 GTPase which acts as a regulator of endocytic trafficking, cytokinesis and intracellular ciliogenesis by participating in membrane delivery. This is Rab11 family-interacting protein 3 (rab11fip3) from Danio rerio (Zebrafish).